The chain runs to 327 residues: COP9 signalosome complex subunit 7 (327 aa).

The PCI domain occupies 4 to 165 (VHHRALDALQ…NPPTVNVTSV (162 aa)). Disordered regions lie at residues 233–260 (GGEQ…AGWK) and 276–327 (GGSN…GKKS). Residues 236–255 (QLQGGNPGQGQGQGQGGLGK) show a composition bias toward gly residues. A compositionally biased stretch (basic residues) spans 315-327 (GARHSKRFLGKKS).

This sequence belongs to the CSN7/EIF3M family. CSN7 subfamily. Component of the COP9 signalosome (CSN) complex. As to expression, present in uninduced vegetative hyphae, induced conidiating cultures and in both conidiospores and ascospores.

The protein resides in the cytoplasm. Its subcellular location is the nucleus. Functionally, component of the COP9 signalosome (CSN) complex that acts as an regulator of the ubiquitin (Ubl) conjugation pathway by mediating the deneddylation of the cullin subunit of SCF-type E3 ubiquitin-protein ligase complexes. The CSN complex seems to link protein degradation to sexual development. May be required for sporulation only at elevated temperatures. The sequence is that of COP9 signalosome complex subunit 7 (csnG) from Emericella nidulans (strain FGSC A4 / ATCC 38163 / CBS 112.46 / NRRL 194 / M139) (Aspergillus nidulans).